The sequence spans 200 residues: Pyridoxal 5'-phosphate synthase subunit PdxT (200 aa).

50–52 (GES) is a binding site for L-glutamine. The active-site Nucleophile is C82. Residues R110 and 138–139 (IR) each bind L-glutamine. Residues H174 and E176 each act as charge relay system in the active site.

This sequence belongs to the glutaminase PdxT/SNO family. In terms of assembly, in the presence of PdxS, forms a dodecamer of heterodimers. Only shows activity in the heterodimer.

It carries out the reaction aldehydo-D-ribose 5-phosphate + D-glyceraldehyde 3-phosphate + L-glutamine = pyridoxal 5'-phosphate + L-glutamate + phosphate + 3 H2O + H(+). It catalyses the reaction L-glutamine + H2O = L-glutamate + NH4(+). The protein operates within cofactor biosynthesis; pyridoxal 5'-phosphate biosynthesis. Catalyzes the hydrolysis of glutamine to glutamate and ammonia as part of the biosynthesis of pyridoxal 5'-phosphate. The resulting ammonia molecule is channeled to the active site of PdxS. The chain is Pyridoxal 5'-phosphate synthase subunit PdxT from Oceanobacillus iheyensis (strain DSM 14371 / CIP 107618 / JCM 11309 / KCTC 3954 / HTE831).